Here is a 452-residue protein sequence, read N- to C-terminus: Disintegrin and metalloproteinase domain-containing protein 11 (452 aa).

The Peptidase M12B domain occupies 1-120 (RRHHSPLLVS…GGGSCLFNKP (120 aa)). Topologically, residues 1–417 (RRHHSPLLVS…EKYKGPSGTN (417 aa)) are extracellular. Cystine bridges form between Cys-31/Cys-115, Cys-74/Cys-99, and Cys-76/Cys-83. The 89-residue stretch at 126-214 (PPSCGNGFIE…ACPANLHKQD (89 aa)) folds into the Disintegrin domain. Residue Asn-149 is glycosylated (N-linked (GlcNAc...) asparagine). A disulfide bridge connects residues Cys-186 and Cys-206. Asn-288 and Asn-356 each carry an N-linked (GlcNAc...) asparagine glycan. Cystine bridges form between Cys-360/Cys-375, Cys-369/Cys-381, and Cys-383/Cys-392. An EGF-like domain is found at 360 to 416 (CPGSWNGVICSDHGVCSNEGKCICHPEWTGKDCSVYDPLPVPKPTGVVEKYKGPSGT). Residues 418–438 (IIIGSIAGAVLIAAIVLGGTG) form a helical membrane-spanning segment. At 439–452 (WGFKNIRRGRSGGG) the chain is on the cytoplasmic side.

The precursor is cleaved by a furin endopeptidase. In terms of tissue distribution, detected in testis and barely expressed in heart and muscle. Not detectable in liver.

It is found in the presynaptic cell membrane. The protein localises to the perikaryon. Its subcellular location is the cell projection. It localises to the axon. Its function is as follows. Probable ligand for integrin in the brain. This is a non-catalytic metalloprotease-like protein. The polypeptide is Disintegrin and metalloproteinase domain-containing protein 11 (adam11) (Xenopus laevis (African clawed frog)).